Reading from the N-terminus, the 394-residue chain is Large ribosomal subunit protein bL27m (394 aa).

Residues 1 to 34 (MSFIKQVGKLIRPNDYSSSIFQTSFLNNVIQVRT) constitute a mitochondrion transit peptide. Disordered regions lie at residues 36–57 (TKRA…LGPK) and 145–181 (AEAE…QRAS). A compositionally biased stretch (basic and acidic residues) spans 145–170 (AEAEKEENHMSRKEFLQQPELEKTRQ).

The protein belongs to the bacterial ribosomal protein bL27 family.

It localises to the mitochondrion. Its function is as follows. Component of the large subunit of mitochondrial ribosome. The chain is Large ribosomal subunit protein bL27m (MRPL2) from Debaryomyces hansenii (strain ATCC 36239 / CBS 767 / BCRC 21394 / JCM 1990 / NBRC 0083 / IGC 2968) (Yeast).